We begin with the raw amino-acid sequence, 327 residues long: Biotin synthase (327 aa).

One can recognise a Radical SAM core domain in the interval 44-273 (FMGNKFDTCS…NAFLRFSGGR (230 aa)). 3 residues coordinate [4Fe-4S] cluster: Cys62, Cys66, and Cys69. Residues Cys138, Cys198, and Arg268 each coordinate [2Fe-2S] cluster.

This sequence belongs to the radical SAM superfamily. Biotin synthase family. In terms of assembly, homodimer. It depends on [4Fe-4S] cluster as a cofactor. [2Fe-2S] cluster is required as a cofactor.

The catalysed reaction is (4R,5S)-dethiobiotin + (sulfur carrier)-SH + 2 reduced [2Fe-2S]-[ferredoxin] + 2 S-adenosyl-L-methionine = (sulfur carrier)-H + biotin + 2 5'-deoxyadenosine + 2 L-methionine + 2 oxidized [2Fe-2S]-[ferredoxin]. It functions in the pathway cofactor biosynthesis; biotin biosynthesis; biotin from 7,8-diaminononanoate: step 2/2. In terms of biological role, catalyzes the conversion of dethiobiotin (DTB) to biotin by the insertion of a sulfur atom into dethiobiotin via a radical-based mechanism. This is Biotin synthase from Parabacteroides distasonis (strain ATCC 8503 / DSM 20701 / CIP 104284 / JCM 5825 / NCTC 11152).